Here is a 466-residue protein sequence, read N- to C-terminus: Arginine biosynthesis bifunctional protein ArgJ, mitochondrial (466 aa).

Substrate contacts are provided by Thr194, Lys223, Thr234, Glu321, Asn461, and Thr466. The active-site Nucleophile is the Thr234.

The protein belongs to the ArgJ family. Heterodimer of an alpha and a beta chain. Post-translationally, the alpha and beta chains are autoproteolytically processed from a single precursor protein within the mitochondrion.

It is found in the mitochondrion matrix. It catalyses the reaction N(2)-acetyl-L-ornithine + L-glutamate = N-acetyl-L-glutamate + L-ornithine. It carries out the reaction L-glutamate + acetyl-CoA = N-acetyl-L-glutamate + CoA + H(+). It participates in amino-acid biosynthesis; L-arginine biosynthesis; L-ornithine and N-acetyl-L-glutamate from L-glutamate and N(2)-acetyl-L-ornithine (cyclic): step 1/1. Its pathway is amino-acid biosynthesis; L-arginine biosynthesis; N(2)-acetyl-L-ornithine from L-glutamate: step 1/4. Its function is as follows. Catalyzes two activities which are involved in the cyclic version of arginine biosynthesis: the synthesis of acetylglutamate from glutamate and acetyl-CoA, and of ornithine by transacetylation between acetylornithine and glutamate. The polypeptide is Arginine biosynthesis bifunctional protein ArgJ, mitochondrial (Aspergillus fumigatus (strain ATCC MYA-4609 / CBS 101355 / FGSC A1100 / Af293) (Neosartorya fumigata)).